We begin with the raw amino-acid sequence, 218 residues long: N-(5'-phosphoribosyl)anthranilate isomerase (218 aa).

It belongs to the TrpF family.

The catalysed reaction is N-(5-phospho-beta-D-ribosyl)anthranilate = 1-(2-carboxyphenylamino)-1-deoxy-D-ribulose 5-phosphate. It functions in the pathway amino-acid biosynthesis; L-tryptophan biosynthesis; L-tryptophan from chorismate: step 3/5. This chain is N-(5'-phosphoribosyl)anthranilate isomerase, found in Chelativorans sp. (strain BNC1).